Consider the following 178-residue polypeptide: Aspartic proteinase nepenthesin-2 (178 aa).

Asp-98 is a catalytic residue.

It belongs to the peptidase A1 family.

Its subcellular location is the secreted. It carries out the reaction Similar to pepsin, but also cleaves on either side of Asp and at Lys-|-Arg.. Its activity is regulated as follows. Inhibited by pepstatin and by diazoacetyl-D,L-norleucine methyl ester (DAN) in the presence of Cu(2+) ions. Its function is as follows. Extracellular proteinase found in the pitcher fluid of carnivorous plants. Digest prey for nitrogen uptake. In Nepenthes distillatoria (Pitcher plant), this protein is Aspartic proteinase nepenthesin-2.